A 320-amino-acid polypeptide reads, in one-letter code: Porphobilinogen deaminase (320 aa).

Cysteine 251 is subject to S-(dipyrrolylmethanemethyl)cysteine.

Belongs to the HMBS family. Monomer. The cofactor is dipyrromethane.

It carries out the reaction 4 porphobilinogen + H2O = hydroxymethylbilane + 4 NH4(+). It participates in porphyrin-containing compound metabolism; protoporphyrin-IX biosynthesis; coproporphyrinogen-III from 5-aminolevulinate: step 2/4. In terms of biological role, tetrapolymerization of the monopyrrole PBG into the hydroxymethylbilane pre-uroporphyrinogen in several discrete steps. The sequence is that of Porphobilinogen deaminase from Phenylobacterium zucineum (strain HLK1).